Reading from the N-terminus, the 115-residue chain is MGTSLLCWVVLGFLGTDHTGAGVSQSPRYKVTKRGQDVALRCDPISGHVSLYWYRQALGQGPEFLTYFNYEAQQDKSGLPNDRFSAERPEGSISTLTIQRTEQRDSAMYRCASSL.

Positions 1-21 are cleaved as a signal peptide; sequence MGTSLLCWVVLGFLGTDHTGA. One can recognise an Ig-like domain in the interval 22-115; it reads GVSQSPRYKV…SAMYRCASSL (94 aa). Residues C42 and C111 are joined by a disulfide bond.

Alpha-beta TR is a heterodimer composed of an alpha and beta chain; disulfide-linked. The alpha-beta TR is associated with the transmembrane signaling CD3 coreceptor proteins to form the TR-CD3 (TcR or TCR). The assembly of alpha-beta TR heterodimers with CD3 occurs in the endoplasmic reticulum where a single alpha-beta TR heterodimer associates with one CD3D-CD3E heterodimer, one CD3G-CD3E heterodimer and one CD247 homodimer forming a stable octameric structure. CD3D-CD3E and CD3G-CD3E heterodimers preferentially associate with TR alpha and TR beta chains, respectively. The association of the CD247 homodimer is the last step of TcR assembly in the endoplasmic reticulum and is required for transport to the cell surface.

The protein resides in the cell membrane. V region of the variable domain of T cell receptor (TR) beta chain that participates in the antigen recognition. Alpha-beta T cell receptors are antigen specific receptors which are essential to the immune response and are present on the cell surface of T lymphocytes. Recognize peptide-major histocompatibility (MH) (pMH) complexes that are displayed by antigen presenting cells (APC), a prerequisite for efficient T cell adaptive immunity against pathogens. Binding of alpha-beta TR to pMH complex initiates TR-CD3 clustering on the cell surface and intracellular activation of LCK that phosphorylates the ITAM motifs of CD3G, CD3D, CD3E and CD247 enabling the recruitment of ZAP70. In turn ZAP70 phosphorylates LAT, which recruits numerous signaling molecules to form the LAT signalosome. The LAT signalosome propagates signal branching to three major signaling pathways, the calcium, the mitogen-activated protein kinase (MAPK) kinase and the nuclear factor NF-kappa-B (NF-kB) pathways, leading to the mobilization of transcription factors that are critical for gene expression and essential for T cell growth and differentiation. The T cell repertoire is generated in the thymus, by V-(D)-J rearrangement. This repertoire is then shaped by intrathymic selection events to generate a peripheral T cell pool of self-MH restricted, non-autoaggressive T cells. Post-thymic interaction of alpha-beta TR with the pMH complexes shapes TR structural and functional avidity. This Homo sapiens (Human) protein is T cell receptor beta variable 7-6.